The chain runs to 110 residues: Large ribosomal subunit protein uL22 (110 aa).

This sequence belongs to the universal ribosomal protein uL22 family. In terms of assembly, part of the 50S ribosomal subunit.

Its function is as follows. This protein binds specifically to 23S rRNA; its binding is stimulated by other ribosomal proteins, e.g. L4, L17, and L20. It is important during the early stages of 50S assembly. It makes multiple contacts with different domains of the 23S rRNA in the assembled 50S subunit and ribosome. The globular domain of the protein is located near the polypeptide exit tunnel on the outside of the subunit, while an extended beta-hairpin is found that lines the wall of the exit tunnel in the center of the 70S ribosome. The polypeptide is Large ribosomal subunit protein uL22 (Idiomarina loihiensis (strain ATCC BAA-735 / DSM 15497 / L2-TR)).